Here is a 146-residue protein sequence, read N- to C-terminus: 3-dehydroquinate dehydratase (146 aa).

The Proton acceptor role is filled by tyrosine 23. 3 residues coordinate substrate: asparagine 79, histidine 85, and aspartate 92. The active-site Proton donor is histidine 105. Substrate-binding positions include 106-107 (IS) and arginine 116.

The protein belongs to the type-II 3-dehydroquinase family. Homododecamer.

It carries out the reaction 3-dehydroquinate = 3-dehydroshikimate + H2O. The protein operates within metabolic intermediate biosynthesis; chorismate biosynthesis; chorismate from D-erythrose 4-phosphate and phosphoenolpyruvate: step 3/7. In terms of biological role, catalyzes a trans-dehydration via an enolate intermediate. This is 3-dehydroquinate dehydratase from Variovorax paradoxus (strain S110).